Consider the following 307-residue polypeptide: 4-hydroxy-tetrahydrodipicolinate synthase (307 aa).

Ser-57 is a pyruvate binding site. Tyr-145 serves as the catalytic Proton donor/acceptor. Lys-173 serves as the catalytic Schiff-base intermediate with substrate. Residue Ile-219 participates in pyruvate binding.

Belongs to the DapA family. As to quaternary structure, homotetramer; dimer of dimers.

The protein resides in the cytoplasm. It carries out the reaction L-aspartate 4-semialdehyde + pyruvate = (2S,4S)-4-hydroxy-2,3,4,5-tetrahydrodipicolinate + H2O + H(+). It participates in amino-acid biosynthesis; L-lysine biosynthesis via DAP pathway; (S)-tetrahydrodipicolinate from L-aspartate: step 3/4. In terms of biological role, catalyzes the condensation of (S)-aspartate-beta-semialdehyde [(S)-ASA] and pyruvate to 4-hydroxy-tetrahydrodipicolinate (HTPA). The chain is 4-hydroxy-tetrahydrodipicolinate synthase from Polynucleobacter asymbioticus (strain DSM 18221 / CIP 109841 / QLW-P1DMWA-1) (Polynucleobacter necessarius subsp. asymbioticus).